The primary structure comprises 476 residues: RNA-binding protein 45 (476 aa).

Positions 1–20 are disordered; the sequence is MDEAGSSASGGGFRPGVDSL. 2 RRM domains span residues 26-106 and 121-195; these read SRIF…IAQS and TRIF…PKNK. K34 participates in a covalent cross-link: Glycyl lysine isopeptide (Lys-Gly) (interchain with G-Cter in SUMO2). A phosphoserine mark is found at S199 and S464. Residues 392–464 enclose the RRM 3 domain; the sequence is ERLFIVFNPH…VRLKVMLADS (73 aa).

The protein resides in the cytoplasm. It is found in the nucleus. RNA-binding protein with binding specificity for poly(C). May play an important role in neural development. The polypeptide is RNA-binding protein 45 (RBM45) (Homo sapiens (Human)).